The chain runs to 338 residues: Fructose-bisphosphate aldolase (338 aa).

Positions 50 and 138 each coordinate substrate. E179 acts as the Proton acceptor in catalysis. K221 acts as the Schiff-base intermediate with dihydroxyacetone-P in catalysis.

This sequence belongs to the class I fructose-bisphosphate aldolase family.

It carries out the reaction beta-D-fructose 1,6-bisphosphate = D-glyceraldehyde 3-phosphate + dihydroxyacetone phosphate. The protein operates within carbohydrate degradation; glycolysis; D-glyceraldehyde 3-phosphate and glycerone phosphate from D-glucose: step 4/4. The protein is Fructose-bisphosphate aldolase of Encephalitozoon cuniculi (strain GB-M1) (Microsporidian parasite).